Reading from the N-terminus, the 470-residue chain is Calcium-binding and coiled-coil domain-containing protein 2 (470 aa).

The CLIR signature appears at 131 to 134 (ILLV). A coiled-coil region spans residues 132–368 (LLVTTEEEAQ…QMEDLSYTLE (237 aa)). An LIR-like motif is present at residues 201–204 (QQNQ). Residues 441–464 (QMQCPECGSEFENFQVFQDHIFCH) form a UBZ1-type zinc finger. Residues Cys444, Cys447, His460, and His464 each contribute to the Zn(2+) site.

Belongs to the CALCOCO family.

The protein localises to the cytoplasm. Its subcellular location is the perinuclear region. It localises to the cytoskeleton. It is found in the cytoplasmic vesicle. The protein resides in the autophagosome membrane. Its function is as follows. Xenophagy-specific receptor required for autophagy-mediated intracellular bacteria degradation. Acts as an effector protein of galectin-sensed membrane damage that restricts the proliferation of infecting pathogens upon entry into the cytosol by targeting galectin-associated bacteria for autophagy. Initially orchestrates bacteria targeting to autophagosomes and subsequently ensures pathogen degradation by regulating pathogen-containing autophagosome maturation. May play a role in ruffle formation and actin cytoskeleton organization and seems to negatively regulate constitutive secretion. The chain is Calcium-binding and coiled-coil domain-containing protein 2 from Xenopus tropicalis (Western clawed frog).